The following is a 104-amino-acid chain: MVEPVIEIEVVYAAVDRQVLRVISVAEGTTVRAALMASGIDAEFPELDLISCPLGIFGKVIADPDARRVQEGDRIEIYRPLLADPKEVRRLRAAKAAEAKARNQ.

It belongs to the UPF0125 (RnfH) family.

In Pseudomonas fluorescens (strain Pf0-1), this protein is Protein RnfH.